We begin with the raw amino-acid sequence, 165 residues long: UPF0303 protein BamMC406_1480 (165 aa).

Belongs to the UPF0303 family.

The protein is UPF0303 protein BamMC406_1480 of Burkholderia ambifaria (strain MC40-6).